We begin with the raw amino-acid sequence, 105 residues long: Fungal protease inhibitor-1 (105 aa).

The first 19 residues, 1–19, serve as a signal peptide directing secretion; it reads MKAVITLLFLACILVVTYG. Disulfide bonds link Cys23-Cys56, Cys28-Cys58, Cys33-Cys59, Cys42-Cys62, Cys72-Cys93, and Cys87-Cys98.

In terms of biological role, inhibits proteases from the fungi A.oryzae and R.oryzae, trypsin and chymotrypsin. Does not inhibit protease from the bacterium B.licheniformis or papain. This is Fungal protease inhibitor-1 from Antheraea mylitta (Tasar silkworm).